Consider the following 98-residue polypeptide: Elicitin Vex1 (98 aa).

Cystine bridges form between cysteine 3-cysteine 71, cysteine 27-cysteine 56, and cysteine 51-cysteine 95. Residue asparagine 92 is glycosylated (N-linked (GlcNAc...) asparagine).

It belongs to the elicitin family.

It localises to the secreted. In terms of biological role, induces local and distal defense responses (incompatible hypersensitive reaction) in plants from the solanaceae and cruciferae families. Elicits leaf necrosis and causes the accumulation of pathogenesis-related proteins. Might interact with the lipidic molecules of the plasma membrane. The sequence is that of Elicitin Vex1 from Phytopythium vexans (Damping-off fungus).